A 216-amino-acid polypeptide reads, in one-letter code: Probable GTP-binding protein EngB (216 aa).

Residues 37–214 (AGLEVAFAGR…RAAMIKLIAE (178 aa)) form the EngB-type G domain. GTP is bound by residues 45-52 (GRSNVGKS), 72-76 (GRTQE), 92-95 (DMPG), 159-162 (TKAD), and 193-195 (TSS). Positions 52 and 74 each coordinate Mg(2+).

Belongs to the TRAFAC class TrmE-Era-EngA-EngB-Septin-like GTPase superfamily. EngB GTPase family. Mg(2+) serves as cofactor.

Its function is as follows. Necessary for normal cell division and for the maintenance of normal septation. This chain is Probable GTP-binding protein EngB, found in Rhodopseudomonas palustris (strain BisB18).